A 98-amino-acid polypeptide reads, in one-letter code: Small ribosomal subunit protein eS24 (98 aa).

Belongs to the eukaryotic ribosomal protein eS24 family.

In Thermococcus onnurineus (strain NA1), this protein is Small ribosomal subunit protein eS24.